Here is a 204-residue protein sequence, read N- to C-terminus: Putative peroxiredoxin ycf42 (204 aa).

The region spanning 5–163 is the Thioredoxin domain; it reads PKIGKTPPNF…LLRILESIQY (159 aa).

This sequence belongs to the peroxiredoxin family. AhpC/Prx1 subfamily.

It localises to the plastid. Its subcellular location is the chloroplast. It carries out the reaction a hydroperoxide + [protein]-dithiol = [protein]-disulfide + an alcohol + H2O. The sequence is that of Putative peroxiredoxin ycf42 (ycf42) from Trieres chinensis (Marine centric diatom).